A 142-amino-acid polypeptide reads, in one-letter code: Lysosomal enzyme trafficking factor (142 aa).

2 helical membrane-spanning segments follow: residues M8 to F28 and L76 to F96.

This sequence belongs to the LYSET family.

Its subcellular location is the golgi apparatus membrane. Functionally, required for mannose-6-phosphate-dependent trafficking of lysosomal enzymes. LYSET bridges GlcNAc-1-phosphate transferase (GNPTAB), to the membrane-bound transcription factor site-1 protease (MBTPS1), thus allowing proteolytic activation of the GNPTAB. GNPTAB is involved in the regulation of M6P-dependent Golgi-to-lysosome trafficking of lysosomal enzymes. LYSET is thus an essential factor for maturation and delivery of lysosomal hydrolases. This chain is Lysosomal enzyme trafficking factor (tmem251), found in Danio rerio (Zebrafish).